Reading from the N-terminus, the 536-residue chain is Arylsulfatase (536 aa).

Ca(2+) contacts are provided by D13, D14, and C51. Catalysis depends on C51, which acts as the Nucleophile. 3-oxoalanine (Cys) is present on C51. H115 is an active-site residue. Ca(2+) is bound by residues D317 and N318.

The protein belongs to the sulfatase family. As to quaternary structure, monomer. It depends on Ca(2+) as a cofactor. Post-translationally, the conversion to 3-oxoalanine (also known as C-formylglycine, FGly), of a serine or cysteine residue in prokaryotes and of a cysteine residue in eukaryotes, is critical for catalytic activity.

It is found in the cytoplasm. It catalyses the reaction an aryl sulfate + H2O = a phenol + sulfate + H(+). Its function is as follows. Hydrolyzes the bond between sulfate and the aromatic ring in a compound such as 4-nitrocatechol sulfate. This is Arylsulfatase (atsA) from Pseudomonas aeruginosa (strain ATCC 15692 / DSM 22644 / CIP 104116 / JCM 14847 / LMG 12228 / 1C / PRS 101 / PAO1).